Reading from the N-terminus, the 151-residue chain is Cell division protein SepF (151 aa).

The segment at 31–53 is disordered; sequence EEVEEPRRRSRTGVKQERETGQN.

It belongs to the SepF family. In terms of assembly, homodimer. Interacts with FtsZ.

The protein localises to the cytoplasm. Cell division protein that is part of the divisome complex and is recruited early to the Z-ring. Probably stimulates Z-ring formation, perhaps through the cross-linking of FtsZ protofilaments. Its function overlaps with FtsA. This is Cell division protein SepF from Halalkalibacterium halodurans (strain ATCC BAA-125 / DSM 18197 / FERM 7344 / JCM 9153 / C-125) (Bacillus halodurans).